The sequence spans 132 residues: Aspartate 1-decarboxylase (132 aa).

The active-site Schiff-base intermediate with substrate; via pyruvic acid is S25. Pyruvic acid (Ser) is present on S25. Substrate is bound at residue T57. Y58 serves as the catalytic Proton donor. Substrate is bound at residue 73–75; the sequence is GAA.

Belongs to the PanD family. Heterooctamer of four alpha and four beta subunits. Pyruvate serves as cofactor. In terms of processing, is synthesized initially as an inactive proenzyme, which is activated by self-cleavage at a specific serine bond to produce a beta-subunit with a hydroxyl group at its C-terminus and an alpha-subunit with a pyruvoyl group at its N-terminus.

It localises to the cytoplasm. The catalysed reaction is L-aspartate + H(+) = beta-alanine + CO2. Its pathway is cofactor biosynthesis; (R)-pantothenate biosynthesis; beta-alanine from L-aspartate: step 1/1. Functionally, catalyzes the pyruvoyl-dependent decarboxylation of aspartate to produce beta-alanine. The sequence is that of Aspartate 1-decarboxylase from Geotalea uraniireducens (strain Rf4) (Geobacter uraniireducens).